The following is a 259-amino-acid chain: Putative hydro-lyase Bphyt_4813 (259 aa).

It belongs to the D-glutamate cyclase family.

This Paraburkholderia phytofirmans (strain DSM 17436 / LMG 22146 / PsJN) (Burkholderia phytofirmans) protein is Putative hydro-lyase Bphyt_4813.